Consider the following 862-residue polypeptide: DNA mismatch repair protein MutS (862 aa).

An ATP-binding site is contributed by 608-615; it reads GPNMAGKS.

Belongs to the DNA mismatch repair MutS family.

Functionally, this protein is involved in the repair of mismatches in DNA. It is possible that it carries out the mismatch recognition step. This protein has a weak ATPase activity. The protein is DNA mismatch repair protein MutS of Bacteroides fragilis (strain YCH46).